Consider the following 211-residue polypeptide: Protein-L-isoaspartate O-methyltransferase (211 aa).

Ser60 is an active-site residue.

This sequence belongs to the methyltransferase superfamily. L-isoaspartyl/D-aspartyl protein methyltransferase family.

It is found in the cytoplasm. The enzyme catalyses [protein]-L-isoaspartate + S-adenosyl-L-methionine = [protein]-L-isoaspartate alpha-methyl ester + S-adenosyl-L-homocysteine. Its function is as follows. Catalyzes the methyl esterification of L-isoaspartyl residues in peptides and proteins that result from spontaneous decomposition of normal L-aspartyl and L-asparaginyl residues. It plays a role in the repair and/or degradation of damaged proteins. This is Protein-L-isoaspartate O-methyltransferase from Pseudomonas fluorescens (strain Pf0-1).